A 749-amino-acid chain; its full sequence is Protein SEY1 homolog 2 (749 aa).

At 1–671 the chain is on the cytoplasmic side; sequence MIKNYGDRYH…QKHKQDFLQN (671 aa). One can recognise a GB1/RHD3-type G domain in the interval 40 to 265; that stretch reads GKNYNIVSII…YEKNVRWSDM (226 aa). Residue 50 to 57 coordinates GTP; the sequence is GSQSTGKS. The stretch at 445-465 forms a coiled coil; it reads NQLKAFVEAQLATFKQQLDNI. The helical transmembrane segment at 672-692 threads the bilayer; sequence IPKPFWFLLLFFMYDDVLRWM. Residues 693-695 lie on the Lumenal side of the membrane; sequence GNP. A helical membrane pass occupies residues 696 to 716; that stretch reads LFLYPILIILCFVGFCIAIGL. The Cytoplasmic segment spans residues 717–749; that stretch reads HSLPKLAFQWVFRTLNQAVIPIIFGGISKLKGS.

This sequence belongs to the TRAFAC class dynamin-like GTPase superfamily. GB1/RHD3 GTPase family. RHD3 subfamily.

The protein localises to the endoplasmic reticulum membrane. In terms of biological role, probable GTP-binding protein that may be involved in cell development. The chain is Protein SEY1 homolog 2 from Paramecium tetraurelia.